The primary structure comprises 157 residues: Protein UXT (157 aa).

This sequence belongs to the UXT family. Homohexamer. Component of the PAQosome complex which is responsible for the biogenesis of several protein complexes and which consists of R2TP complex members RUVBL1, RUVBL2, RPAP3 and PIH1D1, URI complex members PFDN2, PFDN6, PDRG1, UXT and URI1 as well as ASDURF, POLR2E and DNAAF10/WDR92. Interacts with LRPPRC. Interacts with androgen receptor AR (via N-terminus). Interacts with estrogen receptor ESR1; the interaction relocalizes ESR1 from the nucleus to the cytoplasm. In the nucleus, interacts specifically with RELA (via RHD domain) and forms a dynamic complex with NF-kappa-B and is recruited to the NF-kappa-B enhanceosome upon stimulation. Interacts with MECOM. Interacts with URI1. As to quaternary structure, part of complex I composed of TNF-alpha receptor TNFRSF1A, TRADD, TRAF2 and RIPK1 formed in response to TNF-alpha stimulation. Within the complex, interacts (via TPQE motif) with TRAF2; the interaction prevents the recruitment of FADD and CASP8/caspase 8 to complex I. Ubiquitinated by E3 ubiquitin-protein ligase complex containing FBXO7; leading to proteasomal degradation. In terms of tissue distribution, ubiquitous. Expressed in prostate epithelial cells. Expressed in mammary epithelial cells. Highest levels in the heart, skeletal muscle, pancreas, kidney, liver, adrenal gland, peripheral blood leukocytes, lymph node, prostate, and thyroid and the lowest levels in bladder and uterus. Overexpressed in a number of tumor tissues.

It localises to the cytoplasm. The protein resides in the nucleus. It is found in the cytoskeleton. Its subcellular location is the microtubule organizing center. The protein localises to the centrosome. It localises to the spindle pole. Its function is as follows. Involved in gene transcription regulation. Acts in concert with the corepressor URI1 to regulate androgen receptor AR-mediated transcription. Together with URI1, associates with chromatin to the NKX3-1 promoter region. Negatively regulates the transcriptional activity of the estrogen receptor ESR1 by inducing its translocation into the cytoplasm. May act as nuclear chaperone that facilitates the formation of the NF-kappa-B enhanceosome and thus positively regulates NF-kappa-B transcription activity. Potential component of mitochondrial-associated LRPPRC, a multidomain organizer that potentially integrates mitochondria and the microtubular cytoskeleton with chromosome remodeling. Increasing concentrations of UXT contributes to progressive aggregation of mitochondria and cell death potentially through its association with LRPPRC. Suppresses cell transformation and it might mediate this function by interaction and inhibition of the biological activity of cell proliferation and survival stimulatory factors like MECOM. Plays a role in protecting cells against TNF-alpha-induced apoptosis by preventing the recruitment of FADD and caspase 8 to the apoptotic complex I, composed of TRADD, TRAF2 and RIPK1/RIP. The polypeptide is Protein UXT (UXT) (Homo sapiens (Human)).